We begin with the raw amino-acid sequence, 869 residues long: Probable beta-glucosidase F (869 aa).

The signal sequence occupies residues 1-19; the sequence is MRVLSAIALVASLASSALS. N-linked (GlcNAc...) asparagine glycosylation is found at Asn77 and Asn261. Asp289 is a catalytic residue. N-linked (GlcNAc...) asparagine glycans are attached at residues Asn332, Asn364, Asn399, and Asn478. A disordered region spans residues 677 to 697; that stretch reads STYPPTRPPKGPTPTYPTAIP. A compositionally biased stretch (pro residues) spans 681-691; that stretch reads PTRPPKGPTPT. The N-linked (GlcNAc...) asparagine glycan is linked to Asn728.

The protein belongs to the glycosyl hydrolase 3 family.

It is found in the secreted. It catalyses the reaction Hydrolysis of terminal, non-reducing beta-D-glucosyl residues with release of beta-D-glucose.. It functions in the pathway glycan metabolism; cellulose degradation. Functionally, beta-glucosidases are one of a number of cellulolytic enzymes involved in the degradation of cellulosic biomass. Catalyzes the last step releasing glucose from the inhibitory cellobiose. In Aspergillus fumigatus (strain CBS 144.89 / FGSC A1163 / CEA10) (Neosartorya fumigata), this protein is Probable beta-glucosidase F (bglF).